A 149-amino-acid chain; its full sequence is Nucleoside diphosphate kinase 1 (149 aa).

Lys9, Phe57, Arg85, Thr91, Arg102, and Asn112 together coordinate ATP. Catalysis depends on His115, which acts as the Pros-phosphohistidine intermediate.

The protein belongs to the NDK family. Homohexamer. Can also form dodecamers. It depends on Mg(2+) as a cofactor.

It is found in the nucleus. The catalysed reaction is a 2'-deoxyribonucleoside 5'-diphosphate + ATP = a 2'-deoxyribonucleoside 5'-triphosphate + ADP. It catalyses the reaction a ribonucleoside 5'-diphosphate + ATP = a ribonucleoside 5'-triphosphate + ADP. Major role in the synthesis of nucleoside triphosphates other than ATP. The ATP gamma phosphate is transferred to the NDP beta phosphate via a ping-pong mechanism, using a phosphorylated active-site intermediate. Involved in transcription regulation. Has G-quadruplex (G4) DNA-binding activity, which is independent of its nucleotide-binding and kinase activity. Binds folded G4 with low nanomolar affinity and corresponding unfolded G-rich DNA more weakly. Stabilizes folded G4s regardless of whether they are prefolded or not. This chain is Nucleoside diphosphate kinase 1, found in Zea mays (Maize).